We begin with the raw amino-acid sequence, 401 residues long: Acetate kinase (401 aa).

Asn9 contacts Mg(2+). Lys16 lines the ATP pocket. Arg88 lines the substrate pocket. Residue Asp147 is the Proton donor/acceptor of the active site. ATP-binding positions include 207–211 (HLGNG), 282–284 (DCR), and 333–337 (GIGEN). Glu388 contacts Mg(2+).

Belongs to the acetokinase family. As to quaternary structure, homodimer. It depends on Mg(2+) as a cofactor. Mn(2+) serves as cofactor.

It localises to the cytoplasm. It catalyses the reaction acetate + ATP = acetyl phosphate + ADP. Its pathway is metabolic intermediate biosynthesis; acetyl-CoA biosynthesis; acetyl-CoA from acetate: step 1/2. Catalyzes the formation of acetyl phosphate from acetate and ATP. Can also catalyze the reverse reaction. The protein is Acetate kinase of Haemophilus influenzae (strain ATCC 51907 / DSM 11121 / KW20 / Rd).